A 457-amino-acid chain; its full sequence is Probable cytosolic Fe-S cluster assembly factor oxy-4 (457 aa).

Residue C25 participates in [4Fe-4S] cluster binding. Positions 38–59 (KEESQVNIRTKKPKDKESSKTE) are disordered. [4Fe-4S] cluster-binding residues include C71, C74, C77, C176, C232, C380, and C384.

Belongs to the NARF family.

In terms of biological role, component of the cytosolic iron-sulfur (Fe/S) protein assembly machinery. Required for maturation of extramitochondrial Fe/S proteins. The protein is Probable cytosolic Fe-S cluster assembly factor oxy-4 (oxy-4) of Caenorhabditis elegans.